The following is a 286-amino-acid chain: 4-hydroxybenzoate octaprenyltransferase (286 aa).

Transmembrane regions (helical) follow at residues 22-42 (IGTLLLLWPTLWALYLAEKAM), 45-65 (LSVLAIFIFGVFLMRSAGCVI), 98-118 (LFIVLVFCSFLLVLCLNLYTI), 143-163 (FFLGAAFGWSIPMAYGATIEA), 213-233 (IIALLQIITLIFLFSVGYLSQ), 238-255 (YFIVLAIAGLFFVYQCRL), and 266-286 (NAFLNNNYFGLTVFIAVLFGI).

This sequence belongs to the UbiA prenyltransferase family. Mg(2+) serves as cofactor.

It is found in the cell inner membrane. The enzyme catalyses all-trans-octaprenyl diphosphate + 4-hydroxybenzoate = 4-hydroxy-3-(all-trans-octaprenyl)benzoate + diphosphate. The protein operates within cofactor biosynthesis; ubiquinone biosynthesis. In terms of biological role, catalyzes the prenylation of para-hydroxybenzoate (PHB) with an all-trans polyprenyl group. Mediates the second step in the final reaction sequence of ubiquinone-8 (UQ-8) biosynthesis, which is the condensation of the polyisoprenoid side chain with PHB, generating the first membrane-bound Q intermediate 3-octaprenyl-4-hydroxybenzoate. In Histophilus somni (strain 2336) (Haemophilus somnus), this protein is 4-hydroxybenzoate octaprenyltransferase.